The chain runs to 515 residues: Cyclic AMP receptor-like protein G (515 aa).

At 1–16 (MSSIIFIPNDADNINS) the chain is on the extracellular side. A helical transmembrane segment spans residues 17-37 (IMVTISSSLSLVGCLFILSIY). Residues 38–50 (IYYKELREFQLKL) lie on the Cytoplasmic side of the membrane. The chain crosses the membrane as a helical span at residues 51–71 (IFIMTINDFIISIIFLIATHI). Topologically, residues 72-92 (QTKYFDAITNVFPFFCNFPDS) are extracellular. A helical transmembrane segment spans residues 93–113 (LLHYFFLSSFFWEVCIAHTLI). Over 114–129 (QVIKYNNDKVEDNLKK) the chain is Cytoplasmic. The chain crosses the membrane as a helical span at residues 130–150 (YFIFSNGLSALIMVSLFFIRS). Topologically, residues 151–164 (YSKIDCHHDSIFPH) are extracellular. The helical transmembrane segment at 165–185 (LLFFIPLLLTWIYNIIVCALL) threads the bilayer. Residues 186–276 (TKTFKEQAMN…IRKTPNIIWT (91 aa)) are Cytoplasmic-facing. Residues 277-297 (SIFFLFSFGFIWSWSILVIIL) form a helical membrane-spanning segment. At 298–306 (KYLSLDVKY) the chain is on the extracellular side. A helical transmembrane segment spans residues 307 to 327 (ILMISYFFIPLHGCMNAVCFG). The Cytoplasmic segment spans residues 328–515 (VNDRLRMNLK…FCTIDEDETK (188 aa)). Residues 362–375 (NGNNKNNKNNNGAN) are compositionally biased toward low complexity. Disordered regions lie at residues 362-409 (NGNN…YYQI) and 469-515 (NNNN…DETK). The segment covering 385–396 (SPDDDDDEDDDN) has biased composition (acidic residues). Composition is skewed to low complexity over residues 397-407 (NNNNYSDGNYY) and 469-504 (NNNNNNNNNNNNNNNNNNNNNNINNNDNNNNNNNNN).

The protein belongs to the G-protein coupled receptor 5 family.

The protein localises to the membrane. Its function is as follows. Receptor for cAMP. The sequence is that of Cyclic AMP receptor-like protein G (crlG) from Dictyostelium discoideum (Social amoeba).